A 253-amino-acid chain; its full sequence is HTH-type transcriptional regulator YdeO (253 aa).

One can recognise an HTH araC/xylS-type domain in the interval 137 to 233; it reads GKVRNIVNMK…GNSPKRVSKE (97 aa). 2 DNA-binding regions (H-T-H motif) span residues 154 to 175 and 200 to 223; these read KDIC…KQEQ and VNKI…RKHF.

In terms of biological role, induces the expression of gadE. Could also regulate the expression of other genes involved in acid resistance. In Shigella flexneri, this protein is HTH-type transcriptional regulator YdeO (ydeO).